A 505-amino-acid polypeptide reads, in one-letter code: ATP synthase subunit alpha (505 aa).

Residue 170–177 participates in ATP binding; it reads GDRQTGKT.

The protein belongs to the ATPase alpha/beta chains family. In terms of assembly, F-type ATPases have 2 components, CF(1) - the catalytic core - and CF(0) - the membrane proton channel. CF(1) has five subunits: alpha(3), beta(3), gamma(1), delta(1), epsilon(1). CF(0) has four main subunits: a(1), b(1), b'(1) and c(9-12).

Its subcellular location is the cellular thylakoid membrane. The catalysed reaction is ATP + H2O + 4 H(+)(in) = ADP + phosphate + 5 H(+)(out). Its function is as follows. Produces ATP from ADP in the presence of a proton gradient across the membrane. The alpha chain is a regulatory subunit. The sequence is that of ATP synthase subunit alpha from Prochlorococcus marinus (strain MIT 9313).